A 289-amino-acid polypeptide reads, in one-letter code: 4-diphosphocytidyl-2-C-methyl-D-erythritol kinase (289 aa).

The active site involves Lys15. 100–110 (PVSAGLAGGSA) serves as a coordination point for ATP. Residue Asp140 is part of the active site.

This sequence belongs to the GHMP kinase family. IspE subfamily.

The catalysed reaction is 4-CDP-2-C-methyl-D-erythritol + ATP = 4-CDP-2-C-methyl-D-erythritol 2-phosphate + ADP + H(+). Its pathway is isoprenoid biosynthesis; isopentenyl diphosphate biosynthesis via DXP pathway; isopentenyl diphosphate from 1-deoxy-D-xylulose 5-phosphate: step 3/6. In terms of biological role, catalyzes the phosphorylation of the position 2 hydroxy group of 4-diphosphocytidyl-2C-methyl-D-erythritol. This is 4-diphosphocytidyl-2-C-methyl-D-erythritol kinase from Anaplasma marginale (strain Florida).